The following is a 415-amino-acid chain: Plant UBX domain-containing protein 16 (415 aa).

Residues 19-69 (QLDEEIVLFRQDQLISSFLEIAVDQTAETARILLQTTDWNIDQAVNLFLTN) form the UBA domain. A UBX domain is found at 333–413 (DRSVVCSLCV…GLANSLISVT (81 aa)).

This chain is Plant UBX domain-containing protein 16, found in Arabidopsis thaliana (Mouse-ear cress).